Here is a 418-residue protein sequence, read N- to C-terminus: Transcription termination factor Rho (418 aa).

The 76-residue stretch at 48–123 (DIYGDGVLEI…LKVNDINFDR (76 aa)) folds into the Rho RNA-BD domain. ATP contacts are provided by residues 169 to 174 (GKGQRG), 181 to 186 (KAGKTM), and arginine 212.

This sequence belongs to the Rho family. In terms of assembly, homohexamer. The homohexamer assembles into an open ring structure.

In terms of biological role, facilitates transcription termination by a mechanism that involves Rho binding to the nascent RNA, activation of Rho's RNA-dependent ATPase activity, and release of the mRNA from the DNA template. The chain is Transcription termination factor Rho from Allochromatium vinosum (strain ATCC 17899 / DSM 180 / NBRC 103801 / NCIMB 10441 / D) (Chromatium vinosum).